A 321-amino-acid chain; its full sequence is Ribosomal RNA small subunit methyltransferase H (321 aa).

Residues 29–31 (GGH), D48, Y76, D97, and Q104 contribute to the S-adenosyl-L-methionine site. The disordered stretch occupies residues 277–321 (LTRGAEPASETEKAENPRAASVRLRAVERTAPNPDHTRKPTGGAS).

Belongs to the methyltransferase superfamily. RsmH family.

Its subcellular location is the cytoplasm. It catalyses the reaction cytidine(1402) in 16S rRNA + S-adenosyl-L-methionine = N(4)-methylcytidine(1402) in 16S rRNA + S-adenosyl-L-homocysteine + H(+). Specifically methylates the N4 position of cytidine in position 1402 (C1402) of 16S rRNA. The protein is Ribosomal RNA small subunit methyltransferase H of Frankia casuarinae (strain DSM 45818 / CECT 9043 / HFP020203 / CcI3).